A 205-amino-acid chain; its full sequence is Ribosome maturation factor RimP (205 aa).

The segment covering 1–13 has biased composition (polar residues); that stretch reads MSNAEATTSSDRT. A disordered region spans residues 1–27; the sequence is MSNAEATTSSDRTGTGKAEAESVHNPE. Residues 18–27 are compositionally biased toward basic and acidic residues; sequence AEAESVHNPE.

The protein belongs to the RimP family.

It localises to the cytoplasm. Required for maturation of 30S ribosomal subunits. In Arthrobacter sp. (strain FB24), this protein is Ribosome maturation factor RimP.